We begin with the raw amino-acid sequence, 129 residues long: Large ribosomal subunit protein bL19 (129 aa).

This sequence belongs to the bacterial ribosomal protein bL19 family.

Its function is as follows. This protein is located at the 30S-50S ribosomal subunit interface and may play a role in the structure and function of the aminoacyl-tRNA binding site. The protein is Large ribosomal subunit protein bL19 of Burkholderia mallei (strain NCTC 10247).